A 126-amino-acid chain; its full sequence is Profilin (126 aa).

This sequence belongs to the profilin family. Occurs in many kinds of cells as a complex with monomeric actin in a 1:1 ratio. As to expression, expressed in ovary and head.

Its subcellular location is the cytoplasm. It is found in the cytoskeleton. Binds to actin and affects the structure of the cytoskeleton. At high concentrations, profilin prevents the polymerization of actin, whereas it enhances it at low concentrations. By binding to PIP2, it may inhibit the formation of IP3 and DG. This profilin is required for intercellular cytoplasm transport during Drosophila oogenesis. Function in neurons is essential for adult survival, and is important for climbing behavior and activity. This is Profilin (chic) from Drosophila melanogaster (Fruit fly).